Consider the following 679-residue polypeptide: DNA-directed RNA polymerase subunit beta' (679 aa).

Residues C69, C71, C87, and C90 each contribute to the Zn(2+) site. Mg(2+) contacts are provided by D489, D491, and D493.

It belongs to the RNA polymerase beta' chain family. RpoC1 subfamily. As to quaternary structure, in plastids the minimal PEP RNA polymerase catalytic core is composed of four subunits: alpha, beta, beta', and beta''. When a (nuclear-encoded) sigma factor is associated with the core the holoenzyme is formed, which can initiate transcription. It depends on Mg(2+) as a cofactor. The cofactor is Zn(2+).

It is found in the plastid. Its subcellular location is the chloroplast. It carries out the reaction RNA(n) + a ribonucleoside 5'-triphosphate = RNA(n+1) + diphosphate. Its function is as follows. DNA-dependent RNA polymerase catalyzes the transcription of DNA into RNA using the four ribonucleoside triphosphates as substrates. The chain is DNA-directed RNA polymerase subunit beta' from Oenothera argillicola (Appalachian evening primrose).